A 187-amino-acid polypeptide reads, in one-letter code: Guanylate kinase (187 aa).

The Guanylate kinase-like domain maps to 5-183; sequence GRLTVLTGPS…ALKQLETHMQ (179 aa). 12–19 lines the ATP pocket; sequence GPSGVGKG.

This sequence belongs to the guanylate kinase family.

It is found in the cytoplasm. The catalysed reaction is GMP + ATP = GDP + ADP. It carries out the reaction dZMP + ATP = dZDP + ADP. It participates in purine metabolism. Its function is as follows. Essential for recycling GMP and indirectly, cGMP. In terms of biological role, (Microbial infection) Catalyzes the phosphorylation of dZMP to dZDP, when the bacterium is infected by a phage that produces the substrate for the synthesis of dZTP (2- amino-2'-deoxyadenosine 5'-triphosphate), which is then used by the phage as a DNA polymerase substrate. In Synechococcus sp. (strain CC9902), this protein is Guanylate kinase.